The following is a 149-amino-acid chain: Deoxyuridine 5'-triphosphate nucleotidohydrolase (149 aa).

Substrate contacts are provided by residues 68-70 (RSG), asparagine 81, 85-87 (LID), and methionine 95.

It belongs to the dUTPase family. The cofactor is Mg(2+).

It catalyses the reaction dUTP + H2O = dUMP + diphosphate + H(+). The protein operates within pyrimidine metabolism; dUMP biosynthesis; dUMP from dCTP (dUTP route): step 2/2. Its function is as follows. This enzyme is involved in nucleotide metabolism: it produces dUMP, the immediate precursor of thymidine nucleotides and it decreases the intracellular concentration of dUTP so that uracil cannot be incorporated into DNA. The sequence is that of Deoxyuridine 5'-triphosphate nucleotidohydrolase from Polynucleobacter asymbioticus (strain DSM 18221 / CIP 109841 / QLW-P1DMWA-1) (Polynucleobacter necessarius subsp. asymbioticus).